A 521-amino-acid chain; its full sequence is Fucosyltransferase 3 (521 aa).

Over residues 1-12 (MKRGKKNSDAGD) the composition is skewed to basic and acidic residues. Residues 1–29 (MKRGKKNSDAGDRLTNSDTRTGSSELNAM) are disordered. Topologically, residues 1–39 (MKRGKKNSDAGDRLTNSDTRTGSSELNAMMKPSLSSMKT) are cytoplasmic. Residues 14-26 (LTNSDTRTGSSEL) are compositionally biased toward polar residues. Residues 40-60 (MGLLLAVLMVASVMFSLSVVL) form a helical; Signal-anchor for type II membrane protein membrane-spanning segment. Residues 61–521 (RDPPSDDVIE…QATLFHGCKD (461 aa)) lie on the Lumenal side of the membrane. N-linked (GlcNAc...) asparagine glycosylation is found at Asn-152, Asn-222, and Asn-493.

It belongs to the glycosyltransferase 37 family. Expressed in roots, stems, leaves, flowers, siliques and seedlings.

It is found in the golgi apparatus. The protein localises to the golgi stack membrane. It participates in protein modification; protein glycosylation. May be involved in cell wall biosynthesis. May act as a fucosyltransferase. This is Fucosyltransferase 3 (FUT3) from Arabidopsis thaliana (Mouse-ear cress).